The sequence spans 254 residues: 3-deoxy-manno-octulosonate cytidylyltransferase (254 aa).

Belongs to the KdsB family.

It localises to the cytoplasm. It carries out the reaction 3-deoxy-alpha-D-manno-oct-2-ulosonate + CTP = CMP-3-deoxy-beta-D-manno-octulosonate + diphosphate. Its pathway is nucleotide-sugar biosynthesis; CMP-3-deoxy-D-manno-octulosonate biosynthesis; CMP-3-deoxy-D-manno-octulosonate from 3-deoxy-D-manno-octulosonate and CTP: step 1/1. The protein operates within bacterial outer membrane biogenesis; lipopolysaccharide biosynthesis. Functionally, activates KDO (a required 8-carbon sugar) for incorporation into bacterial lipopolysaccharide in Gram-negative bacteria. The polypeptide is 3-deoxy-manno-octulosonate cytidylyltransferase (Pseudomonas aeruginosa (strain LESB58)).